The primary structure comprises 1867 residues: Probable serine/threonine-protein kinase roco8 (1867 aa).

The 78-residue stretch at 16–93 folds into the DEP 1 domain; that stretch reads SSDGLQIKDR…DDYIFYQFDN (78 aa). Disordered stretches follow at residues 96–115 and 121–225; these read NNNNINNNNNNATSTATTAT and VSTK…NSFN. The span at 121 to 223 shows a compositional bias: low complexity; the sequence is VSTKIGSIGK…NSNSTYNSNS (103 aa). Residues 264–342 form the DEP 2 domain; the sequence is GDKGLKLQKK…NNNNGGGGVM (79 aa). LRR repeat units follow at residues 491–512, 515–536, 540–561, 563–584, 586–607, 609–631, 633–656, and 657–678; these read RLDDLCLTHKCISIIPTTIINT, FLRIIDLSFNQLSESNQLESIA, NLESCNLSHNQLSTLPSSFSRL, LLTKLILSHNCFQVIPNVVFQL, NLEELSLAANQLSSISESIGSL, SLEKLDLSFNKQINKIPKELGLL, RLKSLNVLGSNKINELPSFLSTLP, and LLEQLDFSRDIIKSPPKEITSK. The region spanning 693 to 941 is the Roc domain; that stretch reads GTETLSHIKL…NEIIQTLLNQ (249 aa). Disordered regions lie at residues 763–813 and 942–961; these read QNGI…KKRP and SNNNNNNNNNNNYNNNKQSN. Residues 768–793 are compositionally biased toward low complexity; sequence TSSSNLNLSTGTLPPPTQLSSSTSEL. The 138-residue stretch at 974–1111 folds into the COR domain; the sequence is PSIYITLETN…ILYTLKNNSN (138 aa). The disordered stretch occupies residues 1163-1207; it reads SPSLSLSNSSQSVFTNPNNNNNNKSEQQQQQQQQQQQPQPISTSP. The 409-residue stretch at 1456-1864 folds into the Protein kinase domain; that stretch reads LIYQEEIGVG…TLNEIKDSTI (409 aa). ATP is bound by residues 1462–1470 and Lys1483; that span reads IGVGGFSRV. Positions 1509–1546 are disordered; it reads SNSSLSISLSSSTSSLSPPIVNNNNNNNNLNNNLNNLN. Catalysis depends on Asp1721, which acts as the Proton acceptor.

The protein belongs to the protein kinase superfamily. TKL Ser/Thr protein kinase family. ROCO subfamily.

It carries out the reaction L-seryl-[protein] + ATP = O-phospho-L-seryl-[protein] + ADP + H(+). The enzyme catalyses L-threonyl-[protein] + ATP = O-phospho-L-threonyl-[protein] + ADP + H(+). This is Probable serine/threonine-protein kinase roco8 (roco8) from Dictyostelium discoideum (Social amoeba).